Reading from the N-terminus, the 666-residue chain is Threonine--tRNA ligase (666 aa).

The TGS domain maps to 7–70 (QQVTLTVTLP…TADCTAEIIT (64 aa)). Residues 253–555 (DHRKLGTELE…LIEHTAGNFP (303 aa)) are catalytic. Residues Cys-351, His-402, and His-532 each contribute to the Zn(2+) site.

Belongs to the class-II aminoacyl-tRNA synthetase family. In terms of assembly, homodimer. The cofactor is Zn(2+).

The protein resides in the cytoplasm. It catalyses the reaction tRNA(Thr) + L-threonine + ATP = L-threonyl-tRNA(Thr) + AMP + diphosphate + H(+). Catalyzes the attachment of threonine to tRNA(Thr) in a two-step reaction: L-threonine is first activated by ATP to form Thr-AMP and then transferred to the acceptor end of tRNA(Thr). Also edits incorrectly charged L-seryl-tRNA(Thr). The chain is Threonine--tRNA ligase from Chlorobium phaeovibrioides (strain DSM 265 / 1930) (Prosthecochloris vibrioformis (strain DSM 265)).